The chain runs to 353 residues: Peptide chain release factor 1 (353 aa).

Gln-230 is subject to N5-methylglutamine.

It belongs to the prokaryotic/mitochondrial release factor family. In terms of processing, methylated by PrmC. Methylation increases the termination efficiency of RF1.

The protein resides in the cytoplasm. Peptide chain release factor 1 directs the termination of translation in response to the peptide chain termination codons UAG and UAA. This is Peptide chain release factor 1 from Leptospira biflexa serovar Patoc (strain Patoc 1 / ATCC 23582 / Paris).